We begin with the raw amino-acid sequence, 129 residues long: Protein BUNDLE SHEATH DEFECTIVE 2, chloroplastic (129 aa).

The N-terminal 43 residues, 1-43 (MAATASLTTTAPSPPALLKASAPLLISFRPVSRHCKNLCIKTK), are a transit peptide targeting the chloroplast. The segment at 49 to 123 (QSAKKHQKVK…AGFLGGFLST (75 aa)) adopts a CR-type zinc-finger fold. Zn(2+) contacts are provided by Cys-62, Cys-65, Asn-68, Cys-73, Cys-76, Cys-97, Cys-100, Glu-105, Cys-108, and Cys-111.

It belongs to the BSD2 chaperone family. Interacts with the RuBisCo large subunit (RbcL) assembled as an intermediate complex made of eight RbcL and eight BSD2 subunits. Expressed in shoot tissues, in both bundle sheath and mesophyll cells.

The protein localises to the plastid. It is found in the chloroplast stroma. Chloroplast chaperone required for RuBisCo complex biogenesis and translational regulation of the RuBisCo large subunit (RbcL). Stabilizes an end-state assembly intermediate of eight RbcL subunits until the small subunits (RBCSs) become available to produce a complete stable RuBisCo complex containing eight small and eight large subunits. Involved in the differentiation of bundle sheath cells, especially chloroplast structure. The polypeptide is Protein BUNDLE SHEATH DEFECTIVE 2, chloroplastic (Zea mays (Maize)).